A 158-amino-acid chain; its full sequence is Cyclic pyranopterin monophosphate synthase (158 aa).

Substrate is bound by residues Met-74–His-76 and Met-112–Glu-113. The active site involves Asp-127.

It belongs to the MoaC family. As to quaternary structure, homohexamer; trimer of dimers.

The catalysed reaction is (8S)-3',8-cyclo-7,8-dihydroguanosine 5'-triphosphate = cyclic pyranopterin phosphate + diphosphate. Its pathway is cofactor biosynthesis; molybdopterin biosynthesis. Functionally, catalyzes the conversion of (8S)-3',8-cyclo-7,8-dihydroguanosine 5'-triphosphate to cyclic pyranopterin monophosphate (cPMP). The polypeptide is Cyclic pyranopterin monophosphate synthase (Helicobacter pylori (strain HPAG1)).